The chain runs to 597 residues: Cytosolic Fe-S cluster assembly factor nar1 (597 aa).

Cysteine 20 serves as a coordination point for [4Fe-4S] cluster. The segment at 25–46 (ESLPQKESQSENPYEVTKEDKV) is disordered. 5 residues coordinate [4Fe-4S] cluster: cysteine 61, cysteine 64, cysteine 67, cysteine 208, and cysteine 263. Positions 424–449 (RLPGAKPQAVSSSANRRQPMSRNAAP) are disordered. Polar residues predominate over residues 432 to 444 (AVSSSANRRQPMS). The [4Fe-4S] cluster site is built by cysteine 464 and cysteine 468.

The protein belongs to the NARF family.

Component of the cytosolic Fe/S protein assembly machinery. Required for maturation of extramitochondrial Fe/S proteins. May play a role in the transfer of pre-assembled Fe/S clusters to target apoproteins. The chain is Cytosolic Fe-S cluster assembly factor nar1 (nar1) from Aspergillus fumigatus (strain ATCC MYA-4609 / CBS 101355 / FGSC A1100 / Af293) (Neosartorya fumigata).